The chain runs to 139 residues: Actin-depolymerizing factor 2 (139 aa).

The ADF-H domain occupies 7–139 (GLAVSDECKV…SLDIVKSRTN (133 aa)).

This sequence belongs to the actin-binding proteins ADF family. In terms of tissue distribution, expressed in pollen.

Its function is as follows. Actin-depolymerizing protein. Severs actin filaments (F-actin) and binds to actin monomers. This Zea mays (Maize) protein is Actin-depolymerizing factor 2 (ADF2).